The following is a 681-amino-acid chain: UvrABC system protein B (681 aa).

Positions 30 to 419 constitute a Helicase ATP-binding domain; it reads QGVRDGRHWQ…GEVVELLVRP (390 aa). Residue 43–50 participates in ATP binding; it reads GVTGSGKT. The Beta-hairpin motif lies at 96–119; the sequence is YYDFYQPEAYLPSLDKYIAKDLRI. Residues 435–601 enclose the Helicase C-terminal domain; the sequence is QIDNLLAEIR…SIVKSVDQIL (167 aa). The UVR domain occupies 641-676; that stretch reads YAIVEGLRLEMQEAAEHMEYEKAAYLRDEITKMEQV.

It belongs to the UvrB family. Forms a heterotetramer with UvrA during the search for lesions. Interacts with UvrC in an incision complex.

It is found in the cytoplasm. In terms of biological role, the UvrABC repair system catalyzes the recognition and processing of DNA lesions. A damage recognition complex composed of 2 UvrA and 2 UvrB subunits scans DNA for abnormalities. Upon binding of the UvrA(2)B(2) complex to a putative damaged site, the DNA wraps around one UvrB monomer. DNA wrap is dependent on ATP binding by UvrB and probably causes local melting of the DNA helix, facilitating insertion of UvrB beta-hairpin between the DNA strands. Then UvrB probes one DNA strand for the presence of a lesion. If a lesion is found the UvrA subunits dissociate and the UvrB-DNA preincision complex is formed. This complex is subsequently bound by UvrC and the second UvrB is released. If no lesion is found, the DNA wraps around the other UvrB subunit that will check the other stand for damage. This Chlorobium chlorochromatii (strain CaD3) protein is UvrABC system protein B.